A 188-amino-acid chain; its full sequence is uncharacterized protein (188 aa).

This is an uncharacterized protein from Acidianus convivator (ABV).